A 162-amino-acid polypeptide reads, in one-letter code: G/U mismatch-specific DNA glycosylase (162 aa).

This sequence belongs to the uracil-DNA glycosylase (UDG) superfamily. TDG/mug family. In terms of assembly, binds DNA as a monomer.

The protein localises to the cytoplasm. It catalyses the reaction Specifically hydrolyzes mismatched double-stranded DNA and polynucleotides, releasing free uracil.. Its function is as follows. Excises ethenocytosine and uracil, which can arise by alkylation or deamination of cytosine, respectively, from the corresponding mispairs with guanine in ds-DNA. It is capable of hydrolyzing the carbon-nitrogen bond between the sugar-phosphate backbone of the DNA and the mispaired base. The complementary strand guanine functions in substrate recognition. Required for DNA damage lesion repair in stationary-phase cells. The chain is G/U mismatch-specific DNA glycosylase from Serratia marcescens.